Here is a 340-residue protein sequence, read N- to C-terminus: Uroporphyrinogen decarboxylase (340 aa).

Substrate is bound by residues 21–25 (RQAGR), Asp71, Tyr148, Ser203, and His316.

Belongs to the uroporphyrinogen decarboxylase family. As to quaternary structure, homodimer.

It localises to the cytoplasm. It carries out the reaction uroporphyrinogen III + 4 H(+) = coproporphyrinogen III + 4 CO2. The protein operates within porphyrin-containing compound metabolism; protoporphyrin-IX biosynthesis; coproporphyrinogen-III from 5-aminolevulinate: step 4/4. Catalyzes the decarboxylation of four acetate groups of uroporphyrinogen-III to yield coproporphyrinogen-III. The chain is Uroporphyrinogen decarboxylase from Campylobacter lari (strain RM2100 / D67 / ATCC BAA-1060).